Reading from the N-terminus, the 31-residue chain is Cyclotide mech-6 (31 aa).

The segment at residues 1 to 31 (GVIPCGESCVFIPCISSVVGCTCKNKVCYRN) is a cross-link (cyclopeptide (Gly-Asn)). Intrachain disulfides connect Cys-5-Cys-21, Cys-9-Cys-23, and Cys-14-Cys-28.

Post-translationally, this is a cyclic peptide. In terms of processing, contains 3 disulfide bonds.

Functionally, probably participates in a plant defense mechanism (Potential). Binds to and induces leakage in phospholipd membranes, particularly ones containing 1-palmitoyl-2-oleophosphatidylethanolamine (POPE). In Melicytus chathamicus (Chatham Island mahoe), this protein is Cyclotide mech-6.